We begin with the raw amino-acid sequence, 644 residues long: MSFSVTLPDGSKKEFDKAVSVKEVASSIATSLGKAAVGAKVNGQVKPLDYEIDSDVEIAIITDKDEEGLDILRATAAFAFEAVAKKKYPELRLGQHVADEGGFYVDTDKKDQIKVTELPELEKAMEKLIKSGQPIEHVVMDKSELEEMFKDDPFKSDLLKKIDSDKVDAYKLGDFVDFGFDALLPNTGKIKHFKLLSVAGAYWLGKSSNPMLQRIFGTAFFKEAALKEDLKRRAEIKERDHRTIGRDLDLFFVDPKVGAGLPYWMPKGATIRRVVERYIIDREVADGYKHVYTPVLMNLDAYKTSGHWAHYRDDMFPPMDMGDGEMLELRPMNCPSHIQIYKHHIRSYRDLPLRVAELGMMHRYEKSGALSGLQRVREMTLNDGHTFVELDQVQSEFAKILKLIMDVYRDFDITDYYFRLSYRDPKNTDKYFANDEMWERSQKMLKGAMDDLGLDYVEAEGEAAFYGPKLDIQTKTALGNDETMSTIQLDFMLPERFGLTYVGKDGEEHRPVMVHRGIVGTMERFIAYLTEIYKGAFPTWLAPVQAEIIPVNNEAHGEYAEKVRQELAKRGFRVEVDDRNEKMGYKIRESQTQKVPYTLVLGDEEMKNGSVNVRRYGTDEEISKSLDDFINEIDADVKSYSREN.

The TGS domain maps to 1–62; the sequence is MSFSVTLPDG…DSDVEIAIIT (62 aa). Residues 240–538 are catalytic; the sequence is DHRTIGRDLD…LTEIYKGAFP (299 aa). Zn(2+) is bound by residues Cys334, His385, and His515.

It belongs to the class-II aminoacyl-tRNA synthetase family. In terms of assembly, homodimer. The cofactor is Zn(2+).

The protein resides in the cytoplasm. It carries out the reaction tRNA(Thr) + L-threonine + ATP = L-threonyl-tRNA(Thr) + AMP + diphosphate + H(+). In terms of biological role, catalyzes the attachment of threonine to tRNA(Thr) in a two-step reaction: L-threonine is first activated by ATP to form Thr-AMP and then transferred to the acceptor end of tRNA(Thr). Also edits incorrectly charged L-seryl-tRNA(Thr). This Lactobacillus acidophilus (strain ATCC 700396 / NCK56 / N2 / NCFM) protein is Threonine--tRNA ligase.